A 420-amino-acid polypeptide reads, in one-letter code: ATP phosphoribosyltransferase regulatory subunit (420 aa).

It belongs to the class-II aminoacyl-tRNA synthetase family. HisZ subfamily. Heteromultimer composed of HisG and HisZ subunits.

The protein resides in the cytoplasm. The protein operates within amino-acid biosynthesis; L-histidine biosynthesis; L-histidine from 5-phospho-alpha-D-ribose 1-diphosphate: step 1/9. Its function is as follows. Required for the first step of histidine biosynthesis. May allow the feedback regulation of ATP phosphoribosyltransferase activity by histidine. The protein is ATP phosphoribosyltransferase regulatory subunit of Bacillus cereus (strain AH187).